The sequence spans 445 residues: Glycine--tRNA ligase (445 aa).

K97 and E145 together coordinate substrate. ATP is bound by residues 177-179 (RNE), 187-192 (FRTCEF), 262-263 (EI), and 308-311 (GLTR). 192 to 196 (FEQME) contacts substrate. Substrate is bound at residue 304–308 (ETSLG).

Belongs to the class-II aminoacyl-tRNA synthetase family. Homodimer.

It localises to the cytoplasm. The enzyme catalyses tRNA(Gly) + glycine + ATP = glycyl-tRNA(Gly) + AMP + diphosphate. Catalyzes the attachment of glycine to tRNA(Gly). This is Glycine--tRNA ligase from Borrelia hermsii (strain HS1 / DAH).